Here is a 361-residue protein sequence, read N- to C-terminus: Protein Wnt-2 (361 aa).

Positions 1-27 (MNASVLGLCLSGPLVLLLAWLAPPVTS) are cleaved as a signal peptide. Cystine bridges form between Cys-77–Cys-88, Cys-128–Cys-136, Cys-138–Cys-158, Cys-207–Cys-221, Cys-209–Cys-216, Cys-279–Cys-310, Cys-295–Cys-305, Cys-309–Cys-349, Cys-325–Cys-340, Cys-327–Cys-337, and Cys-332–Cys-333. The O-palmitoleoyl serine; by PORCN moiety is linked to residue Ser-213. Asn-296 carries an N-linked (GlcNAc...) asparagine glycan.

The protein belongs to the Wnt family. Palmitoleoylation is required for efficient binding to frizzled receptors. Depalmitoleoylation leads to Wnt signaling pathway inhibition.

It localises to the secreted. Its subcellular location is the extracellular space. It is found in the extracellular matrix. Its function is as follows. Ligand for members of the frizzled family of seven transmembrane receptors. Probable developmental protein. May be a signaling molecule which affects the development of discrete regions of tissues. Is likely to signal over only few cell diameters. The chain is Protein Wnt-2 (WNT2) from Ornithorhynchus anatinus (Duckbill platypus).